The chain runs to 495 residues: Bifunctional protein GlmU (495 aa).

Residues 1–241 (MTFPGDTAVL…SALVAGVNNR (241 aa)) are pyrophosphorylase. UDP-N-acetyl-alpha-D-glucosamine-binding positions include 12-15 (LAAG), Lys26, Gln83, 88-89 (GT), 112-114 (SGD), Gly151, Glu166, Asn181, and Asn239. A Mg(2+)-binding site is contributed by Asp114. Position 239 (Asn239) interacts with Mg(2+). Residues 242–262 (VQLAELASELNRRVVAAHQLA) are linker. The interval 263–495 (GVTVVDPATT…TQPPDADQTP (233 aa)) is N-acetyltransferase. UDP-N-acetyl-alpha-D-glucosamine is bound by residues Arg344 and Lys362. His374 serves as the catalytic Proton acceptor. UDP-N-acetyl-alpha-D-glucosamine contacts are provided by Tyr377 and Asn388. Acetyl-CoA-binding positions include Ala391, 397–398 (NY), Ser416, and Ala434. The tract at residues 457 to 495 (IENWVQRKRPGSPAAQASKRASEMACQQPTQPPDADQTP) is disordered. Positions 483–495 (QQPTQPPDADQTP) are enriched in low complexity.

This sequence in the N-terminal section; belongs to the N-acetylglucosamine-1-phosphate uridyltransferase family. In the C-terminal section; belongs to the transferase hexapeptide repeat family. Homotrimer. Requires Mg(2+) as cofactor.

The protein resides in the cytoplasm. It catalyses the reaction alpha-D-glucosamine 1-phosphate + acetyl-CoA = N-acetyl-alpha-D-glucosamine 1-phosphate + CoA + H(+). The catalysed reaction is N-acetyl-alpha-D-glucosamine 1-phosphate + UTP + H(+) = UDP-N-acetyl-alpha-D-glucosamine + diphosphate. It functions in the pathway nucleotide-sugar biosynthesis; UDP-N-acetyl-alpha-D-glucosamine biosynthesis; N-acetyl-alpha-D-glucosamine 1-phosphate from alpha-D-glucosamine 6-phosphate (route II): step 2/2. Its pathway is nucleotide-sugar biosynthesis; UDP-N-acetyl-alpha-D-glucosamine biosynthesis; UDP-N-acetyl-alpha-D-glucosamine from N-acetyl-alpha-D-glucosamine 1-phosphate: step 1/1. It participates in bacterial outer membrane biogenesis; LPS lipid A biosynthesis. Its function is as follows. Catalyzes the last two sequential reactions in the de novo biosynthetic pathway for UDP-N-acetylglucosamine (UDP-GlcNAc). The C-terminal domain catalyzes the transfer of acetyl group from acetyl coenzyme A to glucosamine-1-phosphate (GlcN-1-P) to produce N-acetylglucosamine-1-phosphate (GlcNAc-1-P), which is converted into UDP-GlcNAc by the transfer of uridine 5-monophosphate (from uridine 5-triphosphate), a reaction catalyzed by the N-terminal domain. The chain is Bifunctional protein GlmU from Mycobacterium tuberculosis (strain ATCC 25177 / H37Ra).